Reading from the N-terminus, the 316-residue chain is DNA-directed RNA polymerase III subunit RPC6 (316 aa).

Residue Ala-2 is modified to N-acetylalanine. Residues Lys-5 and Lys-7 each participate in a glycyl lysine isopeptide (Lys-Gly) (interchain with G-Cter in SUMO2) cross-link. Cys-287, Cys-290, Cys-296, and Cys-307 together coordinate [4Fe-4S] cluster.

The protein belongs to the eukaryotic RPC34/RPC39 RNA polymerase subunit family. Component of the RNA polymerase III complex consisting of 17 subunits: a ten-subunit horseshoe-shaped catalytic core composed of POLR3A/RPC1, POLR3B/RPC2, POLR1C/RPAC1, POLR1D/RPAC2, POLR3K/RPC10, POLR2E/RPABC1, POLR2F/RPABC2, POLR2H/RPABC3, POLR2K/RPABC4 and POLR2L/RPABC5; a mobile stalk composed of two subunits POLR3H/RPC8 and CRCP/RPC9, protruding from the core and functioning primarily in transcription initiation; and additional subunits homologous to general transcription factors of the RNA polymerase II machinery, POLR3C/RPC3-POLR3F/RPC6-POLR3G/RPC7 heterotrimer required for transcription initiation and POLR3D/RPC4-POLR3E/RPC5 heterodimer involved in both transcription initiation and termination. Directly interacts with POLR3C. Interacts with TBP and TFIIIB90 and GTF3C4. Interacts with MAF1. As part of the RNA polymerase III complex, interacts with PKP2.

The protein resides in the nucleus. DNA-dependent RNA polymerase catalyzes the transcription of DNA into RNA using the four ribonucleoside triphosphates as substrates. Specific peripheric component of RNA polymerase III (Pol III) which synthesizes small non-coding RNAs including 5S rRNA, snRNAs, tRNAs and miRNAs from at least 500 distinct genomic loci. Part of POLR3C/RPC3-POLR3F/RPC6-POLR3G/RPC7 heterotrimer that coordinates the dynamics of Pol III stalk and clamp modules during the transition from apo to elongation state. Pol III plays a key role in sensing and limiting infection by intracellular bacteria and DNA viruses, including varicella zoster virus. Acts as a nuclear and cytosolic DNA sensor detecting AT-rich DNA, involved in innate immune response. Can sense non-self dsDNA that serves as template for transcription into dsRNA. The non-self RNA polymerase III transcripts, such as Epstein-Barr virus-encoded RNAs (EBERs) induce type I interferon and NF-kappa-B through the RIG-I pathway. Preferentially binds double-stranded DNA (dsDNA). The chain is DNA-directed RNA polymerase III subunit RPC6 (POLR3F) from Bos taurus (Bovine).